A 306-amino-acid chain; its full sequence is Elongation factor Ts (306 aa).

The involved in Mg(2+) ion dislocation from EF-Tu stretch occupies residues 81–84 (TDFV).

The protein belongs to the EF-Ts family.

The protein localises to the cytoplasm. Associates with the EF-Tu.GDP complex and induces the exchange of GDP to GTP. It remains bound to the aminoacyl-tRNA.EF-Tu.GTP complex up to the GTP hydrolysis stage on the ribosome. The protein is Elongation factor Ts of Polaromonas naphthalenivorans (strain CJ2).